Consider the following 104-residue polypeptide: Secretoglobin family 3A member 1 (104 aa).

An N-terminal signal peptide occupies residues 1–21 (MKLTTTFLVLCVALLSDSGVA).

Belongs to the secretoglobin family. UGRP subfamily. As to quaternary structure, homodimer; disulfide-linked. In terms of tissue distribution, highly expressed in lung, where it localizes to epithelial cells lining the trachea and bronchi. Expression in lung is mainly restricted to bronchi, submucosal glands of the trachea, and tracheal epithelium, with little expression in terminal bronchioles. Expressed in uterus where it localizes to epithelial cells of the uterine glands. Also detected in heart, stomach and small intestine.

The protein resides in the secreted. Secreted cytokine-like protein. Inhibits cell growth in vitro. The polypeptide is Secretoglobin family 3A member 1 (Scgb3a1) (Mus musculus (Mouse)).